The following is a 314-amino-acid chain: Dihydroorotate dehydrogenase (fumarate) (314 aa).

Residues K46, 70–74, and N130 contribute to the substrate site; that span reads NSMGL. Residue 46–47 coordinates FMN; it reads KS. N130 provides a ligand contact to FMN. Catalysis depends on nucleophile residues S132 and C133. FMN contacts are provided by K167 and I195. 196 to 197 is a substrate binding site; sequence NS. FMN-binding positions include G224, 252–253, and 274–275; these read GG and GT.

This sequence belongs to the dihydroorotate dehydrogenase family. Type 1 subfamily. Homodimer. The cofactor is FMN.

The protein localises to the cytoplasm. The enzyme catalyses (S)-dihydroorotate + fumarate = orotate + succinate. It participates in pyrimidine metabolism; UMP biosynthesis via de novo pathway. Functionally, catalyzes the conversion of dihydroorotate to orotate with fumarate as the electron acceptor. The polypeptide is Dihydroorotate dehydrogenase (fumarate) (URA1) (Saccharomyces paradoxus (Yeast)).